Reading from the N-terminus, the 211-residue chain is Thiamine-phosphate synthase (211 aa).

Residues 37–41 (QLRIK) and Asn-69 each bind 4-amino-2-methyl-5-(diphosphooxymethyl)pyrimidine. Mg(2+)-binding residues include Asp-70 and Asp-89. Ser-108 contacts 4-amino-2-methyl-5-(diphosphooxymethyl)pyrimidine. 134–136 (TQT) is a 2-[(2R,5Z)-2-carboxy-4-methylthiazol-5(2H)-ylidene]ethyl phosphate binding site. Lys-137 is a 4-amino-2-methyl-5-(diphosphooxymethyl)pyrimidine binding site. 2-[(2R,5Z)-2-carboxy-4-methylthiazol-5(2H)-ylidene]ethyl phosphate-binding positions include Gly-166 and 186–187 (VS).

Belongs to the thiamine-phosphate synthase family. It depends on Mg(2+) as a cofactor.

It carries out the reaction 2-[(2R,5Z)-2-carboxy-4-methylthiazol-5(2H)-ylidene]ethyl phosphate + 4-amino-2-methyl-5-(diphosphooxymethyl)pyrimidine + 2 H(+) = thiamine phosphate + CO2 + diphosphate. The enzyme catalyses 2-(2-carboxy-4-methylthiazol-5-yl)ethyl phosphate + 4-amino-2-methyl-5-(diphosphooxymethyl)pyrimidine + 2 H(+) = thiamine phosphate + CO2 + diphosphate. The catalysed reaction is 4-methyl-5-(2-phosphooxyethyl)-thiazole + 4-amino-2-methyl-5-(diphosphooxymethyl)pyrimidine + H(+) = thiamine phosphate + diphosphate. It participates in cofactor biosynthesis; thiamine diphosphate biosynthesis; thiamine phosphate from 4-amino-2-methyl-5-diphosphomethylpyrimidine and 4-methyl-5-(2-phosphoethyl)-thiazole: step 1/1. Its function is as follows. Condenses 4-methyl-5-(beta-hydroxyethyl)thiazole monophosphate (THZ-P) and 2-methyl-4-amino-5-hydroxymethyl pyrimidine pyrophosphate (HMP-PP) to form thiamine monophosphate (TMP). The chain is Thiamine-phosphate synthase from Salmonella schwarzengrund (strain CVM19633).